We begin with the raw amino-acid sequence, 297 residues long: Glycerol-3-phosphate dehydrogenase [NAD(P)+] (297 aa).

Tryptophan 11, arginine 33, and lysine 79 together coordinate NADPH. 3 residues coordinate sn-glycerol 3-phosphate: lysine 79, glycine 107, and serine 109. An NADPH-binding site is contributed by alanine 111. Sn-glycerol 3-phosphate contacts are provided by lysine 161, aspartate 214, serine 224, arginine 225, and asparagine 226. Lysine 161 functions as the Proton acceptor in the catalytic mechanism. Arginine 225 contributes to the NADPH binding site. NADPH is bound by residues valine 249 and glutamate 251.

Belongs to the NAD-dependent glycerol-3-phosphate dehydrogenase family.

The protein localises to the cytoplasm. The enzyme catalyses sn-glycerol 3-phosphate + NAD(+) = dihydroxyacetone phosphate + NADH + H(+). It catalyses the reaction sn-glycerol 3-phosphate + NADP(+) = dihydroxyacetone phosphate + NADPH + H(+). It functions in the pathway membrane lipid metabolism; glycerophospholipid metabolism. Its function is as follows. Catalyzes the reduction of the glycolytic intermediate dihydroxyacetone phosphate (DHAP) to sn-glycerol 3-phosphate (G3P), the key precursor for phospholipid synthesis. The polypeptide is Glycerol-3-phosphate dehydrogenase [NAD(P)+] (Campylobacter jejuni subsp. doylei (strain ATCC BAA-1458 / RM4099 / 269.97)).